The primary structure comprises 1282 residues: Trafficking protein particle complex subunit 8 (1282 aa).

Positions T245–P287 are disordered. Residues A255–S273 show a composition bias toward low complexity.

Its function is as follows. Plays a role in endoplasmic reticulum to Golgi apparatus trafficking at a very early stage. Involved in collagen secretion. This is Trafficking protein particle complex subunit 8 from Caenorhabditis elegans.